Reading from the N-terminus, the 359-residue chain is Protein disulfide-isomerase tigA (359 aa).

An N-terminal signal peptide occupies residues 1-19 (MVRLSNLVSCLGLASAVTA). Thioredoxin domains lie at 20-129 (AVVD…EKTG) and 131-250 (KPRG…EKTG). Residues Cys49, Cys52, Cys169, and Cys172 each act as nucleophile in the active site. 2 disulfide bridges follow: Cys49/Cys52 and Cys169/Cys172. The Prevents secretion from ER motif lies at 356–359 (KDEL).

It belongs to the protein disulfide isomerase family.

Its subcellular location is the endoplasmic reticulum lumen. It catalyses the reaction Catalyzes the rearrangement of -S-S- bonds in proteins.. The chain is Protein disulfide-isomerase tigA (tigA) from Aspergillus niger.